Reading from the N-terminus, the 216-residue chain is CsgBAC operon transcriptional regulatory protein (216 aa).

Positions Asn149 to Leu214 constitute an HTH luxR-type domain. The H-T-H motif DNA-binding region spans Asn173 to Tyr192.

It is found in the cell inner membrane. In terms of biological role, the master regulator for adhesive curli fimbriae expression; necessary for transcription of the csgBAC/ymdA operon. Plays a positive role in biofilm formation. May have the capability to respond to starvation and/or high cell density by activating csgBA transcription. Low-level constitutive expression confers an adherent curli fimbriae-expressing phenotype, up-regulates 10 genes and down-regulates 14 others. The sequence is that of CsgBAC operon transcriptional regulatory protein (csgD) from Escherichia coli (strain K12).